The following is an 87-amino-acid chain: Toxin RelG (87 aa).

The protein belongs to the RelE toxin family. Interacts with cognate antitoxin RelF, which neutralizes the toxin. Also interacts with non-cognate antitoxin RelB in vitro, in M.smegmatis this neutralizes the toxicity of this toxin.

In terms of biological role, toxic component of a type II toxin-antitoxin (TA) system. Has RNase activity and preferentially cleaves at the 3'-end of purine ribonucleotides. Overexpression in M.tuberculosis or M.smegmatis inhibits colony formation in a bacteriostatic rather than bacteriocidal fashion. Its toxic effect is neutralized by coexpression with cognate antitoxin RelB2 (shown only for M.smegmatis). Overexpression also increases the number of gentamicin-tolerant and levofloxacin-tolerant persister cells. Functionally, in combination with cognate antitoxin RelF represses its own promoter. Has been seen to bind DNA in complex with antitoxin RelF but not alone. The polypeptide is Toxin RelG (relG) (Mycobacterium tuberculosis (strain ATCC 25618 / H37Rv)).